The following is a 617-amino-acid chain: MASKKWPSFSVTKEFILRFNNTDNRVKEEELLEQARKFTVRCKRKLGLKTLGSGKHVHLPTAWAEVIYLAQCKGEIQDEALNMLYASLDHVSFDCDQLPTLFFLAESVLYRLCCDAFKKEYLYSVEIKLVKIGYLIFLRLFVFFLHGHLENFKQHLLRLQPYLYALYYSEPSYYKYPNILSSLQFILKTAEIICKRELHFEVFESLREVEDPFSDTNHVQLNKRGYEVNHLLWHSVAAWSCVQDNRPQLNAVLDHILFHKAQLQTKCWLDSALALLVLGEAAKLNMACLKTLMDLMTHFLLSPQSQEDYCSIYDIPWASDIVFIYTSIIAEVCLYAATSDLRKTALIGFCVCKDPQQDIHLTNKSEEMPELDGASILTLLKYFSSRISDNCAKVIWVGYYGIVYNLVKMSWELQGDEEQDGFRNMVWQTLQKIKDYEEDPRIQNAVTIAQAELNDAADPFSSKAAPNSEAFSKYIGWRIANTLSRLFFPSLDVSALPQKTPVETDLQRKHTISKRQPEKKGVVRIVMKEHPSVLELSMFPYPDFFTKADKKLEEVIDHHWQKDMETLKQIEAVCEAQNRKDEEEKEKIRFQEIMKQRERKLNKQTKPYEITPSEKKE.

A helical membrane pass occupies residues 129 to 149 (LVKIGYLIFLRLFVFFLHGHL). A coiled-coil region spans residues 567–604 (LKQIEAVCEAQNRKDEEEKEKIRFQEIMKQRERKLNKQ). Residues 598–617 (ERKLNKQTKPYEITPSEKKE) form a disordered region.

The protein localises to the membrane. Its function is as follows. Plays a critical role for male fertility and sperm motility by regulating sperm cytoplasm removal and maintaining axoneme integrity. In Rattus norvegicus (Rat), this protein is Transmembrane protein 232 (Tmem232).